A 180-amino-acid chain; its full sequence is MAPGVARGPTPYWRLRLGGAALLLLLIPVAAAQEPPGAACSQNTNKTCEECLKNVSCLWCNTNKACLDYPVTSVLPPASLCKLSSARWGVCWVNFEALIITMSVVGGTLLLGIAICCCCCCRRKRSRKPDRSEEKAMREREERRIRQEERRAEMKTRHDEIRKKYGLFKEENPYARFENN.

The N-terminal stretch at 1–32 (MAPGVARGPTPYWRLRLGGAALLLLLIPVAAA) is a signal peptide. At 33-96 (QEPPGAACSQ…RWGVCWVNFE (64 aa)) the chain is on the extracellular side. The region spanning 39 to 92 (ACSQNTNKTCEECLKNVSCLWCNTNKACLDYPVTSVLPPASLCKLSSARWGVCW) is the PSI domain. Asn-45 and Asn-54 each carry an N-linked (GlcNAc...) asparagine glycan. A helical transmembrane segment spans residues 97-117 (ALIITMSVVGGTLLLGIAICC). Residues 118 to 180 (CCCCRRKRSR…ENPYARFENN (63 aa)) lie on the Cytoplasmic side of the membrane. A coiled-coil region spans residues 130-165 (DRSEEKAMREREERRIRQEERRAEMKTRHDEIRKKY). Residues 131–157 (RSEEKAMREREERRIRQEERRAEMKTR) are disordered. Residue Tyr-174 is modified to Phosphotyrosine.

Interacts with PTTG1. As to expression, ubiquitous.

Its subcellular location is the membrane. It localises to the cytoplasm. It is found in the nucleus. May facilitate PTTG1 nuclear translocation. This chain is Pituitary tumor-transforming gene 1 protein-interacting protein (PTTG1IP), found in Homo sapiens (Human).